The chain runs to 79 residues: Eumenine mastoparan-OD (79 aa).

An N-terminal signal peptide occupies residues 1–24; it reads MKQTIVIVLLAAVAMMACLQMVAA. AXPX repeat units lie at residues 24 to 27, 30 to 33, 44 to 47, 52 to 55, and 58 to 61; these read AEPL, AAPA, ASPI, ANPE, and ASPE. Residues 25 to 62 constitute a propeptide that is removed on maturation; it reads EPLPEAAPAPSPLAEAEALASPIAEALANPEALASPEA. At Leu76 the chain carries Leucine amide.

Expressed by the venom gland.

It localises to the secreted. The protein resides in the target cell membrane. Functionally, antimicrobial peptide with strong activity against the fungi C.albicans (MIC=6 uM) and B.cinerea (MIC=10 uM), and weaker activity against the Gram-negative bacterium E.coli (MIC=97 uM) and Gram-positive bacterium S.aureus (MIC=97 uM). Shows cytolytic activity against insect cell lines. Has potent hemolytic activity against ovine erythrocytes (80% at 50 uM), but has no hemolytic activity against human erythrocytes. In vivo, peptide injection in the vicinity of the head and thorax of lepidopteran larvae induces feeding disorder that lasts one or two days before recovering. In Orancistrocerus drewseni (Solitary wasp), this protein is Eumenine mastoparan-OD.